Reading from the N-terminus, the 1255-residue chain is Period circadian protein homolog 2 (1255 aa).

A disordered region spans residues 1-79 (MNGYAEFPPS…EPPDARQSPD (79 aa)). Polar residues predominate over residues 35–56 (SSGSSGHETNENCSTGRDSQGS). A Nuclear export signal 1 motif is present at residues 111–120 (LIKTLKELKV). The PAS 1 domain occupies 181-248 (VTSEHIVKNA…FHSFTSPYKL (68 aa)). Positions 308–312 (LCCLL) match the LXXLL motif. Positions 321 to 387 (YEAPRIPPEK…MLAIHKKILQ (67 aa)) constitute a PAS 2 domain. The 44-residue stretch at 395 to 438 (YSPIRFRARNGEYITLDTSWSSFINPWSRKISFIIGRHKVRVGP) folds into the PAC domain. A Nuclear export signal 2 motif is present at residues 462-471 (LTEQIHRLLL). Disordered stretches follow at residues 473 to 557 (PVPH…AVPA) and 617 to 646 (RSSD…SRTG). The segment at 480–484 (SGYGS) is important for protein stability. The span at 504–516 (NGHEDSRRRRAEI) shows a compositional bias: basic and acidic residues. Positions 512–717 (RRAEICKNGN…ALACGLSQEK (206 aa)) are CSNK1E binding domain. 4 positions are modified to phosphoserine: Ser527, Ser530, Ser533, and Ser540. Over residues 529–541 (YSHESGEQKKKSV) the composition is skewed to basic and acidic residues. Residues Ser662, Ser696, Ser700, Ser714, Ser766, and Ser771 each carry the phosphoserine modification. Disordered regions lie at residues 764 to 838 (ERSK…DTSQ) and 931 to 985 (FPSH…QSRS). The short motif at 789-805 (KKTGKNRKLKSKRVKPR) is the Nuclear localization signal element. The segment covering 790–803 (KTGKNRKLKSKRVK) has biased composition (basic residues). Polar residues-rich tracts occupy residues 829-838 (TAWSPSDTSQ) and 936-956 (TLTS…TSIP). The segment at 888 to 1071 (QFAVQPPPFP…NEDLCSASGS (184 aa)) is interaction with PPARG. Ser945 is subject to Phosphoserine. Residues 959 to 972 (PCACPATRATPPSA) are compositionally biased toward low complexity. A Phosphoserine modification is found at Ser977. Positions 989–996 (LQLNLLQL) match the Nuclear export signal 3 motif. A disordered region spans residues 1018 to 1050 (VGADCKPGTSRDQQPKAPLTRDEPSDTQNSDAL). Positions 1057 to 1061 (LNLLL) match the LXXLL motif. Residues 1077–1106 (LGSGSLGCDASPSGAGSSDTSHTSKYFGSI) are disordered. Residues 1090–1106 (GAGSSDTSHTSKYFGSI) are compositionally biased toward polar residues. A Phosphoserine modification is found at Ser1124. Residues 1155-1255 (SRNLEAVLKE…PLNHRIEEQT (101 aa)) are CRY binding domain. The segment at 1231-1255 (GLSEVSDTKEDENGSPLNHRIEEQT) is disordered.

In terms of assembly, homodimer. Component of the circadian core oscillator, which includes the CRY proteins, CLOCK or NPAS2, BMAL1 or BMAL2, CSNK1D and/or CSNK1E, TIMELESS, and the PER proteins. Interacts with CLOCK-BMAL1 (off DNA). Interacts with BMAL2. Interacts directly with PER1 and PER3, and through a C-terminal domain, with CRY1 and CRY2. Interacts (via PAS 2 domain) with TIMELESS. Interacts with NFIL3. Different large complexes have been identified with different repressive functions. The core of PER complexes is composed of at least PER1, PER2, PER3, CRY1, CRY2, CSNK1D and/or CSNK1E. The large PER complex involved in the repression of transcriptional termination is composed of at least PER2, CDK9, DDX5, DHX9, NCBP1 and POLR2A (active). The large PER complex involved in the histone deacetylation is composed of at least HDAC1, PER2, SFPQ and SIN3A. The large PER complex involved in the histone methylation is composed of at least PER2, CBX3, TRIM28, SUV39H1 and/or SUV39H2; CBX3 mediates the formation of the complex. Interacts with SETX; the interaction inhibits termination of circadian target genes. Interacts with the nuclear receptors HNF4A, NR1D1, NR4A2, RORA, PPARA, PPARG and THRA; the interaction with at least PPARG is ligand dependent. Interacts with PML. Interacts (phosphorylated) with BTRC and FBXW11; the interactions trigger proteasomal degradation. Interacts with NONO and SFPQ. Interacts with CAVIN3. Interacts with MAGEL2. Interacts with MAP1LC3B. Interacts with HNF4A. Post-translationally, acetylated. Deacetylated by SIRT1, resulting in decreased protein stability. Deacetylated by SIRT6, preventing its degradation by the proteasome, resulting in increased protein stability. In terms of processing, phosphorylated by CSNK1E and CSNK1D. Phosphorylation results in PER2 protein degradation. May be dephosphorylated by PP1. Ubiquitinated, leading to its proteasomal degradation. Ubiquitination may be inhibited by CRY1. In terms of tissue distribution, widely expressed. Found in heart, brain, placenta, lung, liver, skeleatal muscle, kidney and pancreas. High levels in skeletal muscle and pancreas. Low levels in lung. Isoform 2 is expressed in keratinocytes (at protein level).

The protein localises to the nucleus. It localises to the cytoplasm. The protein resides in the perinuclear region. Its subcellular location is the nucleolus. In terms of biological role, transcriptional repressor which forms a core component of the circadian clock. The circadian clock, an internal time-keeping system, regulates various physiological processes through the generation of approximately 24 hour circadian rhythms in gene expression, which are translated into rhythms in metabolism and behavior. It is derived from the Latin roots 'circa' (about) and 'diem' (day) and acts as an important regulator of a wide array of physiological functions including metabolism, sleep, body temperature, blood pressure, endocrine, immune, cardiovascular, and renal function. Consists of two major components: the central clock, residing in the suprachiasmatic nucleus (SCN) of the brain, and the peripheral clocks that are present in nearly every tissue and organ system. Both the central and peripheral clocks can be reset by environmental cues, also known as Zeitgebers (German for 'timegivers'). The predominant Zeitgeber for the central clock is light, which is sensed by retina and signals directly to the SCN. The central clock entrains the peripheral clocks through neuronal and hormonal signals, body temperature and feeding-related cues, aligning all clocks with the external light/dark cycle. Circadian rhythms allow an organism to achieve temporal homeostasis with its environment at the molecular level by regulating gene expression to create a peak of protein expression once every 24 hours to control when a particular physiological process is most active with respect to the solar day. Transcription and translation of core clock components (CLOCK, NPAS2, BMAL1, BMAL2, PER1, PER2, PER3, CRY1 and CRY2) plays a critical role in rhythm generation, whereas delays imposed by post-translational modifications (PTMs) are important for determining the period (tau) of the rhythms (tau refers to the period of a rhythm and is the length, in time, of one complete cycle). A diurnal rhythm is synchronized with the day/night cycle, while the ultradian and infradian rhythms have a period shorter and longer than 24 hours, respectively. Disruptions in the circadian rhythms contribute to the pathology of cardiovascular diseases, cancer, metabolic syndrome and aging. A transcription/translation feedback loop (TTFL) forms the core of the molecular circadian clock mechanism. Transcription factors, CLOCK or NPAS2 and BMAL1 or BMAL2, form the positive limb of the feedback loop, act in the form of a heterodimer and activate the transcription of core clock genes and clock-controlled genes (involved in key metabolic processes), harboring E-box elements (5'-CACGTG-3') within their promoters. The core clock genes: PER1/2/3 and CRY1/2 which are transcriptional repressors form the negative limb of the feedback loop and interact with the CLOCK|NPAS2-BMAL1|BMAL2 heterodimer inhibiting its activity and thereby negatively regulating their own expression. This heterodimer also activates nuclear receptors NR1D1/2 and RORA/B/G, which form a second feedback loop and which activate and repress BMAL1 transcription, respectively. PER1 and PER2 proteins transport CRY1 and CRY2 into the nucleus with appropriate circadian timing, but also contribute directly to repression of clock-controlled target genes through interaction with several classes of RNA-binding proteins, helicases and others transcriptional repressors. PER appears to regulate circadian control of transcription by at least three different modes. First, interacts directly with the CLOCK-BMAL1 at the tail end of the nascent transcript peak to recruit complexes containing the SIN3-HDAC that remodel chromatin to repress transcription. Second, brings H3K9 methyltransferases such as SUV39H1 and SUV39H2 to the E-box elements of the circadian target genes, like PER2 itself or PER1. The recruitment of each repressive modifier to the DNA seems to be very precisely temporally orchestrated by the large PER complex, the deacetylases acting before than the methyltransferases. Additionally, large PER complexes are also recruited to the target genes 3' termination site through interactions with RNA-binding proteins and helicases that may play a role in transcription termination to regulate transcription independently of CLOCK-BMAL1 interactions. Recruitment of large PER complexes to the elongating polymerase at PER and CRY termination sites inhibited SETX action, impeding RNA polymerase II release and thereby repressing transcriptional reinitiation. May propagate clock information to metabolic pathways via the interaction with nuclear receptors. Coactivator of PPARA and corepressor of NR1D1, binds rhythmically at the promoter of nuclear receptors target genes like BMAL1 or G6PC1. Directly and specifically represses PPARG proadipogenic activity by blocking PPARG recruitment to target promoters and thereby inhibiting transcriptional activation. Required for fatty acid and lipid metabolism, is involved as well in the regulation of circulating insulin levels. Plays an important role in the maintenance of cardiovascular functions through the regulation of NO and vasodilatatory prostaglandins production in aortas. Controls circadian glutamate uptake in synaptic vesicles through the regulation of VGLUT1 expression. May also be involved in the regulation of inflammatory processes. Represses the CLOCK-BMAL1 induced transcription of BHLHE40/DEC1 and ATF4. Negatively regulates the formation of the TIMELESS-CRY1 complex by competing with TIMELESS for binding to CRY1. This Homo sapiens (Human) protein is Period circadian protein homolog 2 (PER2).